Consider the following 134-residue polypeptide: Aspartate 1-decarboxylase (134 aa).

Residue Ser25 is the Schiff-base intermediate with substrate; via pyruvic acid of the active site. Ser25 carries the pyruvic acid (Ser) modification. Thr57 serves as a coordination point for substrate. Catalysis depends on Tyr58, which acts as the Proton donor. Substrate is bound at residue 73–75 (GAA).

This sequence belongs to the PanD family. In terms of assembly, heterooctamer of four alpha and four beta subunits. Requires pyruvate as cofactor. In terms of processing, is synthesized initially as an inactive proenzyme, which is activated by self-cleavage at a specific serine bond to produce a beta-subunit with a hydroxyl group at its C-terminus and an alpha-subunit with a pyruvoyl group at its N-terminus.

The protein localises to the cytoplasm. The catalysed reaction is L-aspartate + H(+) = beta-alanine + CO2. The protein operates within cofactor biosynthesis; (R)-pantothenate biosynthesis; beta-alanine from L-aspartate: step 1/1. Functionally, catalyzes the pyruvoyl-dependent decarboxylation of aspartate to produce beta-alanine. The chain is Aspartate 1-decarboxylase from Citrifermentans bemidjiense (strain ATCC BAA-1014 / DSM 16622 / JCM 12645 / Bem) (Geobacter bemidjiensis).